A 577-amino-acid polypeptide reads, in one-letter code: Glycine--tRNA ligase (577 aa).

R98 and E164 together coordinate substrate. ATP is bound by residues 196–198 (RNE), 206–211 (IRLREF), 328–329 (EC), and 451–454 (GIDR). Residue 211 to 215 (FTQAE) participates in substrate binding. 447-451 (EPSYG) contributes to the substrate binding site.

Belongs to the class-II aminoacyl-tRNA synthetase family.

It localises to the cytoplasm. The enzyme catalyses tRNA(Gly) + glycine + ATP = glycyl-tRNA(Gly) + AMP + diphosphate. Catalyzes the attachment of glycine to tRNA(Gly). The chain is Glycine--tRNA ligase from Methanocaldococcus jannaschii (strain ATCC 43067 / DSM 2661 / JAL-1 / JCM 10045 / NBRC 100440) (Methanococcus jannaschii).